Here is a 73-residue protein sequence, read N- to C-terminus: EAGEECDCGAPANPCCDAATCKLRPGAQCAEGLCCDQCRFIKKGKICRRARGDNPDDRCTGQSADCPRNGYYG.

The Disintegrin domain maps to 1–73; it reads EAGEECDCGA…ADCPRNGYYG (73 aa). Disulfide bonds link C6–C21, C8–C16, C15–C38, C29–C35, C34–C59, and C47–C66. The short motif at 51-53 is the Cell attachment site element; sequence RGD. The segment at 51–73 is disordered; that stretch reads RGDNPDDRCTGQSADCPRNGYYG.

It belongs to the venom metalloproteinase (M12B) family. P-II subfamily. P-IIa sub-subfamily. As to quaternary structure, monomer (disintegrin). As to expression, expressed by the venom gland.

Its subcellular location is the secreted. Inhibits fibrinogen interaction with platelets. Acts by binding to alpha-IIb/beta-3 (ITGA2B/ITGB3) on the platelet surface and inhibits aggregation induced by ADP, thrombin, platelet-activating factor and collagen. The polypeptide is Disintegrin lachesin (Lachesis muta muta (Bushmaster)).